The chain runs to 293 residues: GTPase Era (293 aa).

Residues 3 to 170 (KSGFITIIGR…VELMVKYMPE (168 aa)) enclose the Era-type G domain. Residues 11-18 (GRPNVGKS) are G1. Residue 11-18 (GRPNVGKS) participates in GTP binding. The G2 stretch occupies residues 37 to 41 (QTTRN). The interval 58–61 (DTPG) is G3. GTP is bound by residues 58 to 62 (DTPGI) and 120 to 123 (NKID). The interval 120–123 (NKID) is G4. Residues 149–151 (ISA) are G5. A KH type-2 domain is found at 201-278 (LSKEVPHGIA…YLEVWVKVKK (78 aa)).

It belongs to the TRAFAC class TrmE-Era-EngA-EngB-Septin-like GTPase superfamily. Era GTPase family. In terms of assembly, monomer.

The protein localises to the cytoplasm. The protein resides in the cell membrane. An essential GTPase that binds both GDP and GTP, with rapid nucleotide exchange. Plays a role in 16S rRNA processing and 30S ribosomal subunit biogenesis and possibly also in cell cycle regulation and energy metabolism. The polypeptide is GTPase Era (Clostridium kluyveri (strain NBRC 12016)).